Here is a 117-residue protein sequence, read N- to C-terminus: Large ribosomal subunit protein bL20c (117 aa).

It belongs to the bacterial ribosomal protein bL20 family.

It localises to the plastid. Its subcellular location is the chloroplast. Its function is as follows. Binds directly to 23S ribosomal RNA and is necessary for the in vitro assembly process of the 50S ribosomal subunit. It is not involved in the protein synthesizing functions of that subunit. This Gossypium hirsutum (Upland cotton) protein is Large ribosomal subunit protein bL20c.